The primary structure comprises 338 residues: Heat-inducible transcription repressor HrcA (338 aa).

It belongs to the HrcA family.

Its function is as follows. Negative regulator of class I heat shock genes (grpE-dnaK-dnaJ and groELS operons). Prevents heat-shock induction of these operons. The chain is Heat-inducible transcription repressor HrcA from Bacillus cereus (strain AH820).